The chain runs to 408 residues: S-adenosylmethionine synthase (408 aa).

Position 142–147 (142–147) interacts with ATP; the sequence is GEGSGD.

This sequence belongs to the AdoMet synthase 2 family. Mg(2+) serves as cofactor.

It carries out the reaction L-methionine + ATP + H2O = S-adenosyl-L-methionine + phosphate + diphosphate. The protein operates within amino-acid biosynthesis; S-adenosyl-L-methionine biosynthesis; S-adenosyl-L-methionine from L-methionine: step 1/1. Its function is as follows. Catalyzes the formation of S-adenosylmethionine from methionine and ATP. This chain is S-adenosylmethionine synthase, found in Halobacterium salinarum (strain ATCC 29341 / DSM 671 / R1).